The chain runs to 780 residues: ATP-dependent DNA helicase RecG (780 aa).

3 domain regions span residues 1-350, 351-549, and 550-780; these read MLCS…GGIP, KKIE…EMPP, and GRKE…IEVG. Positions 154–252 are wedge domain; sequence RKIFKLNDLL…VTPKEGEYVR (99 aa). Phenylalanine 367, leucine 369, glycine 399, serine 400, glycine 401, lysine 402, threonine 403, and arginine 436 together coordinate ATP. One can recognise a Helicase ATP-binding domain in the interval 383-544; it reads DMISEKPMNR…FYGDLDVTVI (162 aa). The DEAH box signature appears at 497–500; sequence DEQH. The 166-residue stretch at 563 to 728 folds into the Helicase C-terminal domain; that stretch reads RVNEVYEFVR…EYDLKTRGPG (166 aa).

It belongs to the helicase family. RecG subfamily. As to quaternary structure, monomer.

It catalyses the reaction Couples ATP hydrolysis with the unwinding of duplex DNA by translocating in the 3'-5' direction.. The enzyme catalyses ATP + H2O = ADP + phosphate + H(+). In terms of biological role, plays a critical role in recombination and DNA repair. Helps process Holliday junction intermediates to mature products by catalyzing branch migration. Has replication fork (Y-DNA) regression activity, unwinds stalled or blocked replication forks to make a HJ that can be resolved. Has a DNA unwinding activity characteristic of a DNA helicase with 3'-5' polarity. Might be a DNA translocase rather than a bona fide helicase. This chain is ATP-dependent DNA helicase RecG, found in Thermotoga maritima (strain ATCC 43589 / DSM 3109 / JCM 10099 / NBRC 100826 / MSB8).